Here is a 305-residue protein sequence, read N- to C-terminus: Tyrosine recombinase XerD (305 aa).

A Core-binding (CB) domain is found at 3–88 (PADASVIERF…TLRAFYGLCL (86 aa)). The region spanning 109 to 299 (SLPKALTESQ…ARQHLQKLHA (191 aa)) is the Tyr recombinase domain. Residues arginine 149, lysine 173, histidine 251, arginine 254, and histidine 277 contribute to the active site. The O-(3'-phospho-DNA)-tyrosine intermediate role is filled by tyrosine 286.

It belongs to the 'phage' integrase family. XerD subfamily. As to quaternary structure, forms a cyclic heterotetrameric complex composed of two molecules of XerC and two molecules of XerD.

Its subcellular location is the cytoplasm. Functionally, site-specific tyrosine recombinase, which acts by catalyzing the cutting and rejoining of the recombining DNA molecules. The XerC-XerD complex is essential to convert dimers of the bacterial chromosome into monomers to permit their segregation at cell division. It also contributes to the segregational stability of plasmids. This is Tyrosine recombinase XerD from Xanthomonas axonopodis pv. citri (strain 306).